A 137-amino-acid chain; its full sequence is Ribosome-binding factor A (137 aa).

Belongs to the RbfA family. As to quaternary structure, monomer. Binds 30S ribosomal subunits, but not 50S ribosomal subunits or 70S ribosomes.

The protein resides in the cytoplasm. One of several proteins that assist in the late maturation steps of the functional core of the 30S ribosomal subunit. Associates with free 30S ribosomal subunits (but not with 30S subunits that are part of 70S ribosomes or polysomes). Required for efficient processing of 16S rRNA. May interact with the 5'-terminal helix region of 16S rRNA. The protein is Ribosome-binding factor A of Trichodesmium erythraeum (strain IMS101).